The following is a 177-amino-acid chain: Protein C (177 aa).

Positions 1–10 (MSTKAWNASR) are enriched in polar residues. Positions 1-38 (MSTKAWNASRLSGPDPSTPWSLRKPLQHGSRPPKGKRL) are disordered.

Belongs to the morbillivirus protein C family.

In Rinderpest virus (strain RBOK) (RDV), this protein is Protein C (P/V/C).